The following is a 121-amino-acid chain: Large ribosomal subunit protein uL18 (121 aa).

Belongs to the universal ribosomal protein uL18 family. As to quaternary structure, part of the 50S ribosomal subunit; part of the 5S rRNA/L5/L18/L25 subcomplex. Contacts the 5S and 23S rRNAs.

In terms of biological role, this is one of the proteins that bind and probably mediate the attachment of the 5S RNA into the large ribosomal subunit, where it forms part of the central protuberance. The sequence is that of Large ribosomal subunit protein uL18 from Polaromonas sp. (strain JS666 / ATCC BAA-500).